The following is a 623-amino-acid chain: UvrABC system protein C (623 aa).

The region spanning 12 to 91 (PSPGVYLMKS…IKQHRPKYNI (80 aa)) is the GIY-YIG domain. The 36-residue stretch at 201-236 (TEVARLYRSKMNLAAEQMRYEDAARYRDLLRAIEVT) folds into the UVR domain. The segment at 603 to 623 (RLHGSPLPNPPPPGEGAMDRK) is disordered.

Belongs to the UvrC family. In terms of assembly, interacts with UvrB in an incision complex.

The protein localises to the cytoplasm. Its function is as follows. The UvrABC repair system catalyzes the recognition and processing of DNA lesions. UvrC both incises the 5' and 3' sides of the lesion. The N-terminal half is responsible for the 3' incision and the C-terminal half is responsible for the 5' incision. This chain is UvrABC system protein C, found in Citrifermentans bemidjiense (strain ATCC BAA-1014 / DSM 16622 / JCM 12645 / Bem) (Geobacter bemidjiensis).